The following is a 391-amino-acid chain: Squalene synthase 8 (391 aa).

Belongs to the phytoene/squalene synthase family. It depends on Mg(2+) as a cofactor. Mn(2+) is required as a cofactor.

The protein resides in the endoplasmic reticulum. The enzyme catalyses 2 (2E,6E)-farnesyl diphosphate + NADH + H(+) = squalene + 2 diphosphate + NAD(+). It carries out the reaction 2 (2E,6E)-farnesyl diphosphate + NADPH + H(+) = squalene + 2 diphosphate + NADP(+). It functions in the pathway terpene metabolism; lanosterol biosynthesis; lanosterol from farnesyl diphosphate: step 1/3. Functionally, component of the triterpene saponins (e.g. ginsenosides or panaxosides) and phytosterols biosynthetic pathways. Catalyzes the biosynthesis of squalene. This is Squalene synthase 8 from Panax ginseng (Korean ginseng).